The chain runs to 390 residues: Lipid-A-disaccharide synthase (390 aa).

It belongs to the LpxB family.

The catalysed reaction is a lipid X + a UDP-2-N,3-O-bis[(3R)-3-hydroxyacyl]-alpha-D-glucosamine = a lipid A disaccharide + UDP + H(+). It participates in bacterial outer membrane biogenesis; LPS lipid A biosynthesis. Its function is as follows. Condensation of UDP-2,3-diacylglucosamine and 2,3-diacylglucosamine-1-phosphate to form lipid A disaccharide, a precursor of lipid A, a phosphorylated glycolipid that anchors the lipopolysaccharide to the outer membrane of the cell. The chain is Lipid-A-disaccharide synthase from Haemophilus influenzae (strain PittGG).